A 233-amino-acid polypeptide reads, in one-letter code: 7-cyano-7-deazaguanine synthase (233 aa).

Position 7–17 (L7–S17) interacts with ATP. Zn(2+) is bound by residues C195, C206, C209, and C212.

Belongs to the QueC family. The cofactor is Zn(2+).

The enzyme catalyses 7-carboxy-7-deazaguanine + NH4(+) + ATP = 7-cyano-7-deazaguanine + ADP + phosphate + H2O + H(+). Its pathway is purine metabolism; 7-cyano-7-deazaguanine biosynthesis. Its function is as follows. Catalyzes the ATP-dependent conversion of 7-carboxy-7-deazaguanine (CDG) to 7-cyano-7-deazaguanine (preQ(0)). In Methanococcus vannielii (strain ATCC 35089 / DSM 1224 / JCM 13029 / OCM 148 / SB), this protein is 7-cyano-7-deazaguanine synthase.